Reading from the N-terminus, the 297-residue chain is 3-mercaptopyruvate sulfurtransferase (297 aa).

Alanine 2 bears the N-acetylalanine mark. Positions 25–144 (ASQPLKLLDA…WLSQNLPISS (120 aa)) constitute a Rhodanese 1 domain. The residue at position 35 (serine 35) is a Phosphoserine. Lysine 40 is subject to N6-acetyllysine; alternate. Residue lysine 40 is modified to N6-succinyllysine; alternate. The tract at residues 145–160 (GKSPSEPAEFCAQLDP) is hinge. 2 positions are modified to N6-succinyllysine: lysine 146 and lysine 164. Residues 174–288 (DARRFQVVDA…WYMRAQPEHV (115 aa)) form the Rhodanese 2 domain. Residue arginine 188 coordinates substrate. Residue cysteine 248 is the Cysteine persulfide intermediate of the active site.

As to quaternary structure, monomer (active form). Homodimer; disulfide-linked (inactive form). In terms of processing, the N-terminus is blocked. As to expression, expressed in liver, heart, kidney and brain. Localizes to tubular epithelium in the kidney, pericentral hepatocytes in the liver, cardiac cells in the heart and neuroglial cells in the brain. Also expressed in vascular endothelium of the thoracic aorta. Weak expression in lung and thymus.

The protein resides in the cytoplasm. It is found in the mitochondrion. It localises to the synapse. Its subcellular location is the synaptosome. The catalysed reaction is 2-oxo-3-sulfanylpropanoate + [thioredoxin]-dithiol = [thioredoxin]-disulfide + hydrogen sulfide + pyruvate + H(+). By oxidative stress, and thioredoxin. Under oxidative stress conditions, the catalytic cysteine site is converted to a sulfenate which inhibits the MPST enzyme activity. Reduced thioredoxin cleaves an intersubunit disulfide bond to turn on the redox switch and reactivate the enzyme. Inhibited by different oxidants, hydrogen peroxide and tetrathionate. In terms of biological role, transfer of a sulfur ion to cyanide or to other thiol compounds. Also has weak rhodanese activity. Detoxifies cyanide and is required for thiosulfate biosynthesis. Acts as an antioxidant. In combination with cysteine aminotransferase (CAT), contributes to the catabolism of cysteine and is an important producer of hydrogen sulfide in the brain, retina and vascular endothelial cells. Hydrogen sulfide H(2)S is an important synaptic modulator, signaling molecule, smooth muscle contractor and neuroprotectant. Its production by the 3MST/CAT pathway is regulated by calcium ions. In Rattus norvegicus (Rat), this protein is 3-mercaptopyruvate sulfurtransferase (Mpst).